The primary structure comprises 28 residues: U-actitoxin-Ate1 (28 aa).

The first 15 residues, 1–15 (MSLILIFFAFTVLKS), serve as a signal peptide directing secretion. A disulfide bond links C20 and C26.

As to quaternary structure, monomer in solution. May be N-glycosylated at Asn-22. Activity with this modification has not be tested. Highly expressed in the tentacles. Weakly expressed in acrorhagi and mesenteric filaments.

It is found in the secreted. It localises to the nematocyst. Its function is as follows. Probable toxin expected to be employed in prey capture and/or defense against predators (based on its abundance in tentacles). Has only a weak affinity for lipid membranes. Shows moderate cytotoxic activity against breast cancer cell lines (MCF-7 and MDA-MB-231). The chain is U-actitoxin-Ate1 from Actinia tenebrosa (Australian red waratah sea anemone).